The primary structure comprises 695 residues: Elongation factor G (695 aa).

The tr-type G domain occupies 10–285; sequence AKTRNIGIMA…AVIDYLPSPI (276 aa). GTP contacts are provided by residues 19–26, 83–87, and 137–140; these read AHIDAGKT, DTPGH, and NKMD.

Belongs to the TRAFAC class translation factor GTPase superfamily. Classic translation factor GTPase family. EF-G/EF-2 subfamily.

The protein localises to the cytoplasm. In terms of biological role, catalyzes the GTP-dependent ribosomal translocation step during translation elongation. During this step, the ribosome changes from the pre-translocational (PRE) to the post-translocational (POST) state as the newly formed A-site-bound peptidyl-tRNA and P-site-bound deacylated tRNA move to the P and E sites, respectively. Catalyzes the coordinated movement of the two tRNA molecules, the mRNA and conformational changes in the ribosome. In Limosilactobacillus reuteri (strain DSM 20016) (Lactobacillus reuteri), this protein is Elongation factor G.